Here is a 231-residue protein sequence, read N- to C-terminus: Pathogenesis-related thaumatin-like protein 3.7 (231 aa).

An N-terminal signal peptide occupies residues 1 to 27 (MATVSDLALLLVAGLVAISLHMQEAGA). Cystine bridges form between Cys36-Cys230, Cys77-Cys87, Cys92-Cys98, Cys143-Cys218, Cys148-Cys201, Cys156-Cys166, Cys170-Cys179, and Cys180-Cys188.

The protein belongs to the thaumatin family.

Its function is as follows. May be involved in disease resistance. This is Pathogenesis-related thaumatin-like protein 3.7 from Cryptomeria japonica (Japanese cedar).